The chain runs to 143 residues: Small ribosomal subunit protein uS12 (143 aa).

Positions 1-19 (MGKPKGIRAARKLKTHRQA) are enriched in basic residues. The segment at 1-21 (MGKPKGIRAARKLKTHRQAQR) is disordered. Position 62 is a hydroxyproline (P62).

This sequence belongs to the universal ribosomal protein uS12 family. As to quaternary structure, component of the 40S small ribosomal subunit.

It is found in the cytoplasm. The protein resides in the cytosol. The protein localises to the rough endoplasmic reticulum. The polypeptide is Small ribosomal subunit protein uS12 (rps-23) (Brugia malayi (Filarial nematode worm)).